The chain runs to 282 residues: NADPH-dependent 7-cyano-7-deazaguanine reductase (282 aa).

88–90 (IES) contributes to the substrate binding site. 90 to 91 (SK) contacts NADPH. Catalysis depends on C190, which acts as the Thioimide intermediate. The Proton donor role is filled by D197. Substrate is bound at residue 229-230 (HE). 258 to 259 (RG) lines the NADPH pocket.

The protein belongs to the GTP cyclohydrolase I family. QueF type 2 subfamily. Homodimer.

It localises to the cytoplasm. It carries out the reaction 7-aminomethyl-7-carbaguanine + 2 NADP(+) = 7-cyano-7-deazaguanine + 2 NADPH + 3 H(+). The protein operates within tRNA modification; tRNA-queuosine biosynthesis. Functionally, catalyzes the NADPH-dependent reduction of 7-cyano-7-deazaguanine (preQ0) to 7-aminomethyl-7-deazaguanine (preQ1). The polypeptide is NADPH-dependent 7-cyano-7-deazaguanine reductase (Escherichia coli O157:H7).